A 612-amino-acid chain; its full sequence is Dihydroxy-acid dehydratase (612 aa).

Mg(2+) is bound at residue D81. C122 contacts [2Fe-2S] cluster. Positions 123 and 124 each coordinate Mg(2+). Residue K124 is modified to N6-carboxylysine. Residue C195 coordinates [2Fe-2S] cluster. E491 is a Mg(2+) binding site. S517 (proton acceptor) is an active-site residue.

The protein belongs to the IlvD/Edd family. As to quaternary structure, homodimer. It depends on [2Fe-2S] cluster as a cofactor. The cofactor is Mg(2+).

It catalyses the reaction (2R)-2,3-dihydroxy-3-methylbutanoate = 3-methyl-2-oxobutanoate + H2O. It carries out the reaction (2R,3R)-2,3-dihydroxy-3-methylpentanoate = (S)-3-methyl-2-oxopentanoate + H2O. Its pathway is amino-acid biosynthesis; L-isoleucine biosynthesis; L-isoleucine from 2-oxobutanoate: step 3/4. It participates in amino-acid biosynthesis; L-valine biosynthesis; L-valine from pyruvate: step 3/4. Functions in the biosynthesis of branched-chain amino acids. Catalyzes the dehydration of (2R,3R)-2,3-dihydroxy-3-methylpentanoate (2,3-dihydroxy-3-methylvalerate) into 2-oxo-3-methylpentanoate (2-oxo-3-methylvalerate) and of (2R)-2,3-dihydroxy-3-methylbutanoate (2,3-dihydroxyisovalerate) into 2-oxo-3-methylbutanoate (2-oxoisovalerate), the penultimate precursor to L-isoleucine and L-valine, respectively. The protein is Dihydroxy-acid dehydratase of Rhizobium etli (strain CIAT 652).